Reading from the N-terminus, the 471-residue chain is GTPase Der (471 aa).

EngA-type G domains lie at 5–168 (PVIA…TDLE) and 186–359 (IRVA…DSAF). Residues 11-18 (GRPNVGKS), 58-62 (DTGGI), 120-123 (NKTD), 192-199 (GRPNVGKS), 239-243 (DTAGV), and 304-307 (NKWD) contribute to the GTP site. One can recognise a KH-like domain in the interval 360-444 (IKIGTNELTR…PIRLEFKSGT (85 aa)).

Belongs to the TRAFAC class TrmE-Era-EngA-EngB-Septin-like GTPase superfamily. EngA (Der) GTPase family. Associates with the 50S ribosomal subunit.

In terms of biological role, GTPase that plays an essential role in the late steps of ribosome biogenesis. This is GTPase Der from Alcanivorax borkumensis (strain ATCC 700651 / DSM 11573 / NCIMB 13689 / SK2).